Here is a 206-residue protein sequence, read N- to C-terminus: Small ribosomal subunit protein uS4 (206 aa).

Residues 96 to 156 (GRLDNVVYRM…EKSKKQARIK (61 aa)) enclose the S4 RNA-binding domain.

This sequence belongs to the universal ribosomal protein uS4 family. In terms of assembly, part of the 30S ribosomal subunit. Contacts protein S5. The interaction surface between S4 and S5 is involved in control of translational fidelity.

In terms of biological role, one of the primary rRNA binding proteins, it binds directly to 16S rRNA where it nucleates assembly of the body of the 30S subunit. Functionally, with S5 and S12 plays an important role in translational accuracy. The sequence is that of Small ribosomal subunit protein uS4 from Histophilus somni (strain 2336) (Haemophilus somnus).